We begin with the raw amino-acid sequence, 866 residues long: Leucine--tRNA ligase (866 aa).

Residues 59–69 carry the 'HIGH' region motif; sequence PYPSGDLHMGH. The segment at 393–421 is disordered; that stretch reads VPVIKTDPQTGEPLLPESAPLESPAETGQ. Residues 404 to 418 show a composition bias toward low complexity; the sequence is EPLLPESAPLESPAE. A 'KMSKS' region motif is present at residues 628–632; that stretch reads AMSKS. Position 631 (Lys-631) interacts with ATP.

This sequence belongs to the class-I aminoacyl-tRNA synthetase family.

The protein resides in the cytoplasm. It carries out the reaction tRNA(Leu) + L-leucine + ATP = L-leucyl-tRNA(Leu) + AMP + diphosphate. This Leifsonia xyli subsp. xyli (strain CTCB07) protein is Leucine--tRNA ligase.